Consider the following 310-residue polypeptide: tRNA-dihydrouridine(16) synthase (310 aa).

FMN is bound by residues 7–9 and Q68; that span reads PMQ. The active-site Proton donor is the C98. Residues K139, 200–202, and 224–225 each bind FMN; these read NGE and GR.

This sequence belongs to the Dus family. DusC subfamily. The cofactor is FMN.

It carries out the reaction 5,6-dihydrouridine(16) in tRNA + NADP(+) = uridine(16) in tRNA + NADPH + H(+). The catalysed reaction is 5,6-dihydrouridine(16) in tRNA + NAD(+) = uridine(16) in tRNA + NADH + H(+). Catalyzes the synthesis of 5,6-dihydrouridine (D), a modified base found in the D-loop of most tRNAs, via the reduction of the C5-C6 double bond in target uridines. Specifically modifies U16 in tRNAs. The protein is tRNA-dihydrouridine(16) synthase of Haemophilus influenzae (strain ATCC 51907 / DSM 11121 / KW20 / Rd).